A 225-amino-acid chain; its full sequence is T4 protein (225 aa).

This sequence belongs to the poxviruses B9 family.

The chain is T4 protein from Rabbit fibroma virus (strain Kasza) (RFV).